The chain runs to 155 residues: Small ribosomal subunit protein uS7 (155 aa).

The protein belongs to the universal ribosomal protein uS7 family. As to quaternary structure, part of the 30S ribosomal subunit. Contacts proteins S9 and S11.

Functionally, one of the primary rRNA binding proteins, it binds directly to 16S rRNA where it nucleates assembly of the head domain of the 30S subunit. Is located at the subunit interface close to the decoding center, probably blocks exit of the E-site tRNA. This is Small ribosomal subunit protein uS7 from Chlorobium chlorochromatii (strain CaD3).